Reading from the N-terminus, the 339-residue chain is Ketol-acid reductoisomerase (NADP(+)) (339 aa).

The 182-residue stretch at 1–182 (MRVYYDRDAD…GGGRSGVIET (182 aa)) folds into the KARI N-terminal Rossmann domain. NADP(+)-binding positions include 24-27 (YGSQ), R48, S51, T53, and 83-86 (DELQ). The active site involves H108. Residue G134 coordinates NADP(+). Residues 183 to 328 (TFKEECETDL…EKLRGMMPWI (146 aa)) form the KARI C-terminal knotted domain. Positions 191, 195, 227, and 231 each coordinate Mg(2+). Residue S252 participates in substrate binding.

This sequence belongs to the ketol-acid reductoisomerase family. Requires Mg(2+) as cofactor.

The enzyme catalyses (2R)-2,3-dihydroxy-3-methylbutanoate + NADP(+) = (2S)-2-acetolactate + NADPH + H(+). The catalysed reaction is (2R,3R)-2,3-dihydroxy-3-methylpentanoate + NADP(+) = (S)-2-ethyl-2-hydroxy-3-oxobutanoate + NADPH + H(+). Its pathway is amino-acid biosynthesis; L-isoleucine biosynthesis; L-isoleucine from 2-oxobutanoate: step 2/4. It functions in the pathway amino-acid biosynthesis; L-valine biosynthesis; L-valine from pyruvate: step 2/4. Its function is as follows. Involved in the biosynthesis of branched-chain amino acids (BCAA). Catalyzes an alkyl-migration followed by a ketol-acid reduction of (S)-2-acetolactate (S2AL) to yield (R)-2,3-dihydroxy-isovalerate. In the isomerase reaction, S2AL is rearranged via a Mg-dependent methyl migration to produce 3-hydroxy-3-methyl-2-ketobutyrate (HMKB). In the reductase reaction, this 2-ketoacid undergoes a metal-dependent reduction by NADPH to yield (R)-2,3-dihydroxy-isovalerate. In Brucella anthropi (strain ATCC 49188 / DSM 6882 / CCUG 24695 / JCM 21032 / LMG 3331 / NBRC 15819 / NCTC 12168 / Alc 37) (Ochrobactrum anthropi), this protein is Ketol-acid reductoisomerase (NADP(+)).